A 743-amino-acid polypeptide reads, in one-letter code: Probable TonB-dependent siderophore receptor PiuA (743 aa).

The first 28 residues, 1 to 28, serve as a signal peptide directing secretion; the sequence is MSLIRTRKKIVSSAIASSLSMIATTAMA. In terms of domain architecture, TBDR plug spans 61-167; it reads PLLDTPKSVS…VGGSINMISK (107 aa). A TBDR beta-barrel domain is found at 172–743; that stretch reads GDFLEGSVAA…SAVLAVNFKY (572 aa). 2 disulfide bridges follow: Cys-408–Cys-416 and Cys-627–Cys-632.

Belongs to the TonB-dependent receptor family.

The protein resides in the cell outer membrane. Probably involved in the initial step of iron uptake by binding iron chelating siderophores, thereby allowing extraction of iron from the environment. May bind the siderophore, ferric enterobactin, with micromolar affinity. The protein is Probable TonB-dependent siderophore receptor PiuA of Acinetobacter baumannii (strain ATCC 19606 / DSM 30007 / JCM 6841 / CCUG 19606 / CIP 70.34 / NBRC 109757 / NCIMB 12457 / NCTC 12156 / 81).